A 92-amino-acid chain; its full sequence is MSEANVNKKEKGQKKVRTGYVVSDKMAKTIVVELEDRKQHALYGKIMRRNSRVKAHDEEGLAGVGDRVRIEETRPLSKDKHFRLLDIVEKAR.

It belongs to the universal ribosomal protein uS17 family. As to quaternary structure, part of the 30S ribosomal subunit.

One of the primary rRNA binding proteins, it binds specifically to the 5'-end of 16S ribosomal RNA. This chain is Small ribosomal subunit protein uS17, found in Corynebacterium urealyticum (strain ATCC 43042 / DSM 7109).